The following is a 275-amino-acid chain: MTSIAHERFHAVAEEPAYARENAPAVSRSAPAAISLTGLEKSFGGNRVLRGINLHIPAGQFVAVIGKSGCGKSTLLRILMGLDEPSAGELHFEDADGAQASPNARIVFQEPRLLPWLSVADNVVVGLGDGVDSRAAAKAAEAVLAEVQLGEKTEEWPARLSGGQRQRVALARALISRPGVLALDEPLGALDALTRISMQELINRVWRELGFTAVLVTHDVSEAVHLADRVIVLDEGRIALDLPIPHPRPRRHGHPGLCELEGRLLAAILGTDGGH.

In terms of domain architecture, ABC transporter spans 34–260 (ISLTGLEKSF…RHGHPGLCEL (227 aa)). 66-73 (GKSGCGKS) is an ATP binding site.

It belongs to the ABC transporter superfamily. Aliphatic sulfonates importer (TC 3.A.1.17.2) family. The complex is composed of two ATP-binding proteins (SsuB), two transmembrane proteins (SsuC) and a solute-binding protein (SsuA).

It localises to the cell inner membrane. It catalyses the reaction ATP + H2O + aliphatic sulfonate-[sulfonate-binding protein]Side 1 = ADP + phosphate + aliphatic sulfonateSide 2 + [sulfonate-binding protein]Side 1.. Part of the ABC transporter complex SsuABC involved in aliphatic sulfonates import. Responsible for energy coupling to the transport system. This chain is Aliphatic sulfonates import ATP-binding protein SsuB 1, found in Rhizobium johnstonii (strain DSM 114642 / LMG 32736 / 3841) (Rhizobium leguminosarum bv. viciae).